A 261-amino-acid polypeptide reads, in one-letter code: Small ribosomal subunit protein mS23 (261 aa).

Residues 233 to 261 (RASSPSASWTNETEEEQKPIDQDVEEIQL) are disordered.

Belongs to the mitochondrion-specific ribosomal protein mS23 family. As to quaternary structure, component of the mitochondrial small ribosomal subunit.

It localises to the mitochondrion. The sequence is that of Small ribosomal subunit protein mS23 (RSM25) from Kluyveromyces lactis (strain ATCC 8585 / CBS 2359 / DSM 70799 / NBRC 1267 / NRRL Y-1140 / WM37) (Yeast).